A 152-amino-acid chain; its full sequence is Nucleoside diphosphate kinase (152 aa).

ATP-binding residues include Lys11, Phe59, Arg87, Thr93, Arg104, and Asn114. His117 acts as the Pros-phosphohistidine intermediate in catalysis.

The protein belongs to the NDK family. Homotetramer. Mg(2+) is required as a cofactor.

The protein localises to the cytoplasm. It catalyses the reaction a 2'-deoxyribonucleoside 5'-diphosphate + ATP = a 2'-deoxyribonucleoside 5'-triphosphate + ADP. The enzyme catalyses a ribonucleoside 5'-diphosphate + ATP = a ribonucleoside 5'-triphosphate + ADP. Its function is as follows. Major role in the synthesis of nucleoside triphosphates other than ATP. The ATP gamma phosphate is transferred to the NDP beta phosphate via a ping-pong mechanism, using a phosphorylated active-site intermediate. This is Nucleoside diphosphate kinase from Prochlorococcus marinus (strain MIT 9303).